The primary structure comprises 137 residues: Large ribosomal subunit protein uL16 (137 aa).

It belongs to the universal ribosomal protein uL16 family. As to quaternary structure, part of the 50S ribosomal subunit.

Functionally, binds 23S rRNA and is also seen to make contacts with the A and possibly P site tRNAs. This Azorhizobium caulinodans (strain ATCC 43989 / DSM 5975 / JCM 20966 / LMG 6465 / NBRC 14845 / NCIMB 13405 / ORS 571) protein is Large ribosomal subunit protein uL16.